The sequence spans 1582 residues: Alpha-2-macroglobulin (1582 aa).

The signal sequence occupies residues 1-15 (MICLAALAVAVPARA). Positions 1080-1083 (CAEQ) form a cross-link, isoglutamyl cysteine thioester (Cys-Gln).

The protein belongs to the protease inhibitor I39 (alpha-2-macroglobulin) family. Bacterial alpha-2-macroglobulin subfamily.

Functionally, protects the bacterial cell from host peptidases. The sequence is that of Alpha-2-macroglobulin from Ralstonia nicotianae (strain ATCC BAA-1114 / GMI1000) (Ralstonia solanacearum).